A 2335-amino-acid chain; its full sequence is Pre-mRNA-processing-splicing factor 8 (2335 aa).

Ala2 carries the post-translational modification N-acetylalanine. The segment at 812–1303 (TTVHWLESRR…KIQTRIKIGL (492 aa)) is reverse transcriptase homology domain. Ser859 and Ser1358 each carry phosphoserine. Residues 1304 to 1577 (NSKMPSRFPP…TLKISLIQIF (274 aa)) are linker. At Lys1425 the chain carries N6,N6-dimethyllysine. An N6-acetyllysine modification is found at Lys1463. An important for branch point selection region spans residues 1513–1526 (MKWKKLTNAQRSGL). A restriction endonuclease homology domain region spans residues 1581–1752 (LWQKIHESIV…LRERIRKGLQ (172 aa)). The segment at 1669-2034 (GDYDSHDIER…QIAEIEKQTK (366 aa)) is involved in interaction with pre-mRNA 5' splice site. An RNase H homology domain region spans residues 1767 to 2020 (NYGELFSNQI…ILGMEISAPS (254 aa)). The 132-residue stretch at 2103–2234 (TYILPKNVLK…LTAYKLTPSG (132 aa)) folds into the MPN domain. The segment at 2301–2335 (PKEFYHEVHRPSHFLNFALLQEGEVYSADREDLYA) is required for interaction with EFTUD2 and SNRNP200.

In terms of assembly, part of the U5 snRNP complex. Component of the U4/U6-U5 tri-snRNP complex composed of the U4, U6 and U5 snRNAs and at least PRPF3, PRPF4, PRPF6, PRPF8, PRPF31, SNRNP200, TXNL4A, SNRNP40, DDX23, CD2BP2, PPIH, SNU13, EFTUD2, SART1 and USP39. Component of the U5.U4atac/U6atac snRNP complexes in U12-dependent spliceosomes. Within the minor spliceosome, which acts on U12-type introns, interacts with PPIL2 and RBM48. Core component of U2-type precatalytic, catalytic and postcatalytic spliceosomal complexes. Found in a mRNA splicing-dependent exon junction complex (EJC) with SRRM1. Interacts with U5 snRNP proteins SNRP116 and SNRNP40. Interacts with EFTUD2. Interacts (via the MPN (JAB/Mov34) domain) with PRPF3 ('Lys-63'-linked polyubiquitinated); may stabilize the U4/U6-U5 tri-snRNP complex. Interacts (via RNase H homology domain) with AAR2. Interacts with RPAP3 and URI1 in a ZNHIT2-dependent manner. Interacts with C9orf78. Interacts with SNRNP200; the interaction is direct. Interacts with TSSC4; the interaction is direct. As to expression, widely expressed.

It is found in the nucleus. The protein localises to the nucleus speckle. Plays a role in pre-mRNA splicing as core component of precatalytic, catalytic and postcatalytic spliceosomal complexes, both of the predominant U2-type spliceosome and the minor U12-type spliceosome. Functions as a scaffold that mediates the ordered assembly of spliceosomal proteins and snRNAs. Required for the assembly of the U4/U6-U5 tri-snRNP complex, a building block of the spliceosome. Functions as a scaffold that positions spliceosomal U2, U5 and U6 snRNAs at splice sites on pre-mRNA substrates, so that splicing can occur. Interacts with both the 5' and the 3' splice site. This is Pre-mRNA-processing-splicing factor 8 (PRPF8) from Homo sapiens (Human).